Reading from the N-terminus, the 474-residue chain is L-arabinose isomerase 2 (474 aa).

Glu-306, Glu-331, His-348, and His-447 together coordinate Mn(2+).

This sequence belongs to the arabinose isomerase family. It depends on Mn(2+) as a cofactor.

The catalysed reaction is beta-L-arabinopyranose = L-ribulose. Its pathway is carbohydrate degradation; L-arabinose degradation via L-ribulose; D-xylulose 5-phosphate from L-arabinose (bacterial route): step 1/3. Functionally, catalyzes the conversion of L-arabinose to L-ribulose. The chain is L-arabinose isomerase 2 from Bacillus licheniformis (strain ATCC 14580 / DSM 13 / JCM 2505 / CCUG 7422 / NBRC 12200 / NCIMB 9375 / NCTC 10341 / NRRL NRS-1264 / Gibson 46).